Consider the following 133-residue polypeptide: ATP synthase epsilon chain (133 aa).

Belongs to the ATPase epsilon chain family. F-type ATPases have 2 components, CF(1) - the catalytic core - and CF(0) - the membrane proton channel. CF(1) has five subunits: alpha(3), beta(3), gamma(1), delta(1), epsilon(1). CF(0) has three main subunits: a, b and c.

Its subcellular location is the cell membrane. Functionally, produces ATP from ADP in the presence of a proton gradient across the membrane. This chain is ATP synthase epsilon chain, found in Bacillus mycoides (strain KBAB4) (Bacillus weihenstephanensis).